The sequence spans 1079 residues: Psi-producing oxygenase A (1079 aa).

Residues 105–446 (TNTFLTTLWN…DGSYDDNDLV (342 aa)) form a linoleate 8R-lipoxygenase region. H202 lines the heme b pocket. The active site involves Y374. A heme b-binding site is contributed by H377. The 9,12-octadecadienoate 8-hydroperoxide 8R-isomerase stretch occupies residues 654 to 1079 (QFINSHSACM…WDGDLPEVKE (426 aa)).

It belongs to the peroxidase family. As to quaternary structure, homotetramer. Heme b serves as cofactor.

The enzyme catalyses (9Z,12Z)-octadecadienoate + O2 = (8R,9Z,12Z)-8-hydroperoxyoctadeca-9,12-dienoate. It catalyses the reaction (8R,9Z,12Z)-8-hydroperoxyoctadeca-9,12-dienoate = (5S,8R,9Z,12Z)-5,8-dihydroxyoctadeca-9,12-dienoate. Its function is as follows. Bifunctional heme-containing enzyme that oxidizes linoleic acid to (8R,9Z,12Z)-8-hydroperoxyoctadeca-9,12-dienoate (within the N-terminal heme peroxidase domain), which is subsequently isomerized to (5S,8R,9Z,12Z)-5,8-dihydroxyoctadeca-9,12-dienoate (within the C-terminal P450 heme thiolate domain). Oxidized unsaturated fatty acids, so-called oxylipins, derived from endogenous fatty acids, influence the development of the asexual conidiophores and sexual cleistothecia and regulate the secondary metabolism. These substances were collectively named psi factors and are primarily a mixture of hydroxylated oleic, linoleic and alpha-linolenic acids. They are termed psi-beta, psi-alpha, and psi-gamma, respectively. Oxylipins may also serve as activators of mammalian immune responses contributing to enhanced resistance to opportunistic fungi and as factors that modulate fungal development contributing to resistance to host defenses. This is Psi-producing oxygenase A (ppoA) from Aspergillus fumigatus (strain CBS 144.89 / FGSC A1163 / CEA10) (Neosartorya fumigata).